A 206-amino-acid polypeptide reads, in one-letter code: MSGTTETQLRDLLSSMHLRHRFLGVFDKSFPGFLDPHVPASAIVNTGSRASGGMHWIGFAFDPAAGRCYMFDPFGWSDQKLWELYRVKYNAFMRRTGLRQPDRCFTLVRSTEAVQCPCSAACGLFSALFIVSFDRYRSKPMDGNPVIDTVVGVKHENMNSPPYRDILHRNQERTYYWWTKNSAYFRAHQEELRRETALNALPENHV.

Active-site residues include histidine 55, aspartate 72, and cysteine 122.

This sequence belongs to the peptidase C5 family. Interacts with protease cofactor pVI-C; this interaction is necessary for protease activation.

Its subcellular location is the virion. It localises to the host nucleus. It carries out the reaction Cleaves proteins of the adenovirus and its host cell at two consensus sites: -Yaa-Xaa-Gly-Gly-|-Xaa- and -Yaa-Xaa-Gly-Xaa-|-Gly- (in which Yaa is Met, Ile or Leu, and Xaa is any amino acid).. Requires DNA and protease cofactor for maximal activation. Inside nascent virions, becomes partially activated by binding to the viral DNA, allowing it to cleave the cofactor that binds to the protease and fully activates it. Actin, like the viral protease cofactor, seems to act as a cofactor in the cleavage of cytokeratin 18 and of actin itself. Functionally, cleaves viral precursor proteins (pTP, pIIIa, pVI, pVII, pVIII, and pX) inside newly assembled particles giving rise to mature virions. Protease complexed to its cofactor slides along the viral DNA to specifically locate and cleave the viral precursors. Mature virions have a weakened organization compared to the unmature virions, thereby facilitating subsequent uncoating. Without maturation, the particle lacks infectivity and is unable to uncoat. Late in adenovirus infection, in the cytoplasm, may participate in the cytoskeleton destruction. Cleaves host cell cytoskeletal keratins K7 and K18. This is Protease from Fowl adenovirus A serotype 1 (strain CELO / Phelps) (FAdV-1).